Consider the following 442-residue polypeptide: QWRF motif-containing protein 6 (442 aa).

Disordered regions lie at residues 1–144 and 221–240; these read MEAK…LSQQ and FSRL…ADTK. Positions 57-66 are enriched in basic residues; that stretch reads KQHHLQHHQI. Residues 80–89 are compositionally biased toward basic and acidic residues; it reads KMADGDENRS. The QWRF motif signature appears at 264–267; that stretch reads QWRF.

This sequence belongs to the QWRF family.

This is QWRF motif-containing protein 6 (QWRF6) from Arabidopsis thaliana (Mouse-ear cress).